A 144-amino-acid polypeptide reads, in one-letter code: Transcription antitermination protein NusB (144 aa).

Belongs to the NusB family.

Its function is as follows. Involved in transcription antitermination. Required for transcription of ribosomal RNA (rRNA) genes. Binds specifically to the boxA antiterminator sequence of the ribosomal RNA (rrn) operons. This is Transcription antitermination protein NusB from Dictyoglomus turgidum (strain DSM 6724 / Z-1310).